The primary structure comprises 779 residues: uncharacterized protein (779 aa).

[4Fe-4S] cluster is bound by residues Cys72 and Cys75.

The protein belongs to the prokaryotic molybdopterin-containing oxidoreductase family. [4Fe-4S] cluster serves as cofactor. Mo-bis(molybdopterin guanine dinucleotide) is required as a cofactor.

This is an uncharacterized protein from Mycobacterium bovis (strain ATCC BAA-935 / AF2122/97).